Here is a 405-residue protein sequence, read N- to C-terminus: Probable succinyl-diaminopimelate desuccinylase (405 aa).

Residue histidine 72 coordinates Zn(2+). Aspartate 74 is a catalytic residue. Residue aspartate 105 coordinates Zn(2+). Glutamate 139 serves as the catalytic Proton acceptor. Zn(2+) is bound by residues glutamate 140, glutamate 165, and histidine 377.

Belongs to the peptidase M20A family. It depends on Zn(2+) as a cofactor. Co(2+) is required as a cofactor.

It catalyses the reaction N-succinyl-(2S,6S)-2,6-diaminopimelate + H2O = (2S,6S)-2,6-diaminopimelate + succinate. It functions in the pathway amino-acid biosynthesis; L-lysine biosynthesis via DAP pathway; LL-2,6-diaminopimelate from (S)-tetrahydrodipicolinate (succinylase route): step 3/3. The polypeptide is Probable succinyl-diaminopimelate desuccinylase (dapE) (Staphylococcus epidermidis (strain ATCC 35984 / DSM 28319 / BCRC 17069 / CCUG 31568 / BM 3577 / RP62A)).